Consider the following 198-residue polypeptide: TATA-box-binding protein (198 aa).

A run of 2 repeats spans residues 14–90 and 105–181.

It belongs to the TBP family.

Functionally, general factor that plays a role in the activation of archaeal genes transcribed by RNA polymerase. Binds specifically to the TATA box promoter element which lies close to the position of transcription initiation. This Saccharolobus shibatae (strain ATCC 51178 / DSM 5389 / JCM 8931 / NBRC 15437 / B12) (Sulfolobus shibatae) protein is TATA-box-binding protein.